We begin with the raw amino-acid sequence, 470 residues long: Uronate isomerase (470 aa).

The protein belongs to the metallo-dependent hydrolases superfamily. Uronate isomerase family.

The enzyme catalyses D-glucuronate = D-fructuronate. The catalysed reaction is aldehydo-D-galacturonate = keto-D-tagaturonate. Its pathway is carbohydrate metabolism; pentose and glucuronate interconversion. The sequence is that of Uronate isomerase from Serratia proteamaculans (strain 568).